Consider the following 90-residue polypeptide: U7-theraphotoxin-Hhn1a 6 (90 aa).

A signal peptide spans 1 to 19 (MKTAIFTVVLALAVFAVLS). The propeptide occupies 20-50 (FGWEANEKALSEEFTELIHEKEAASEAEARE). Disulfide bonds link Cys51–Cys65, Cys58–Cys70, and Cys64–Cys81.

It belongs to the neurotoxin 10 (Hwtx-1) family. 13 (Hntx-13) subfamily. In terms of tissue distribution, expressed by the venom gland.

It is found in the secreted. In terms of biological role, ion channel inhibitor. This Cyriopagopus hainanus (Chinese bird spider) protein is U7-theraphotoxin-Hhn1a 6.